Here is a 116-residue protein sequence, read N- to C-terminus: Non-specific lipid-transfer protein (116 aa).

Positions 1–25 (MASMVMNVLCVAVACMVFSASYADA) are cleaved as a signal peptide. Cystine bridges form between Cys28/Cys75, Cys38/Cys52, Cys53/Cys98, and Cys73/Cys112.

This sequence belongs to the plant LTP family.

Functionally, plant non-specific lipid-transfer proteins transfer phospholipids as well as galactolipids across membranes. May play a role in wax or cutin deposition in the cell walls of expanding epidermal cells and certain secretory tissues. This Gerbera hybrida (Daisy) protein is Non-specific lipid-transfer protein.